The chain runs to 229 residues: Growth factor receptor-bound protein 2 (229 aa).

2 SH3 domains span residues Met-1–His-58 and Gln-168–Arg-227. The 112-residue stretch at Trp-60–Thr-171 folds into the SH2 domain.

The protein resides in the nucleus. It localises to the cytoplasm. The protein localises to the endosome. Its subcellular location is the golgi apparatus. Adapter protein that provides a critical link between cell surface growth factor receptors and the Ras signaling pathway. Promotes meiotic reinitiation during oocyte maturation. In Xenopus tropicalis (Western clawed frog), this protein is Growth factor receptor-bound protein 2.